The chain runs to 291 residues: Probable peptide ABC transporter permease protein y4tQ (291 aa).

A run of 5 helical transmembrane segments spans residues 28-48 (LVLLGGGILLLLILLALAAPL), 92-112 (LIVGLLSAVCAAVCGLLIGVI), 137-157 (LLAIALLSLTGPGIGILIVAI), 213-233 (ATVCASAIMTEAGLSFIGVGV), and 249-269 (LFLAIAPLTIFAPGLCLAVTV). The ABC transmembrane type-1 domain occupies 88-276 (ARISLIVGLL…VTVLAVNLLG (189 aa)).

It belongs to the binding-protein-dependent transport system permease family. OppBC subfamily.

It is found in the cell inner membrane. In terms of biological role, probably part of the binding-protein-dependent transport system y4tOPQRS for a peptide. Probably responsible for the translocation of the substrate across the membrane. This chain is Probable peptide ABC transporter permease protein y4tQ, found in Sinorhizobium fredii (strain NBRC 101917 / NGR234).